Here is a 107-residue protein sequence, read N- to C-terminus: Colipase (107 aa).

The N-terminal stretch at 1 to 17 (MEKVLVLLLVALSVAYA) is a signal peptide. The propeptide at 18 to 22 (APGPR) is enterostatin, activation peptide. Disulfide bonds link Cys34–Cys45, Cys40–Cys56, Cys44–Cys78, Cys66–Cys86, and Cys80–Cys104.

This sequence belongs to the colipase family. Forms a 1:1 stoichiometric complex with pancreatic lipase. As to expression, expressed by the pancreas.

It is found in the secreted. In terms of biological role, colipase is a cofactor of pancreatic lipase. It allows the lipase to anchor itself to the lipid-water interface. Without colipase the enzyme is washed off by bile salts, which have an inhibitory effect on the lipase. Functionally, enterostatin has a biological activity as a satiety signal. The sequence is that of Colipase (CLPS) from Oryctolagus cuniculus (Rabbit).